The primary structure comprises 118 residues: Large ribosomal subunit protein bL20 (118 aa).

Belongs to the bacterial ribosomal protein bL20 family.

Its function is as follows. Binds directly to 23S ribosomal RNA and is necessary for the in vitro assembly process of the 50S ribosomal subunit. It is not involved in the protein synthesizing functions of that subunit. This chain is Large ribosomal subunit protein bL20, found in Kosmotoga olearia (strain ATCC BAA-1733 / DSM 21960 / TBF 19.5.1).